A 199-amino-acid chain; its full sequence is Protein GrpE (199 aa).

Over residues 1–24 (MSKQNKKDWKKFKDEHKEEHKVEN) the composition is skewed to basic and acidic residues. The interval 1–52 (MSKQNKKDWKKFKDEHKEEHKVENEILEEETDEESQHQEPALGHPSYTALEE) is disordered.

This sequence belongs to the GrpE family. As to quaternary structure, homodimer.

The protein resides in the cytoplasm. Its function is as follows. Participates actively in the response to hyperosmotic and heat shock by preventing the aggregation of stress-denatured proteins, in association with DnaK and GrpE. It is the nucleotide exchange factor for DnaK and may function as a thermosensor. Unfolded proteins bind initially to DnaJ; upon interaction with the DnaJ-bound protein, DnaK hydrolyzes its bound ATP, resulting in the formation of a stable complex. GrpE releases ADP from DnaK; ATP binding to DnaK triggers the release of the substrate protein, thus completing the reaction cycle. Several rounds of ATP-dependent interactions between DnaJ, DnaK and GrpE are required for fully efficient folding. The protein is Protein GrpE of Legionella pneumophila.